The following is a 348-amino-acid chain: Quinone oxidoreductase-like protein 1 (348 aa).

It belongs to the zinc-containing alcohol dehydrogenase family. Quinone oxidoreductase subfamily. As to quaternary structure, component of the FERRY complex composed of five subunits, TBCK, PPP1R21, FERRY3, CRYZL1 and GATD1 with a ratio of 1:2:1:2:4, respectively.

It is found in the early endosome. Component of the FERRY complex (Five-subunit Endosomal Rab5 and RNA/ribosome intermediary). The FERRY complex directly interacts with mRNAs and RAB5A, and functions as a RAB5A effector involved in the localization and the distribution of specific mRNAs most likely by mediating their endosomal transport. The complex recruits mRNAs and ribosomes to early endosomes through direct mRNA-interaction. This is Quinone oxidoreductase-like protein 1 (Cryzl1) from Mus musculus (Mouse).